The sequence spans 875 residues: ATP-dependent helicase Lhr-Core (875 aa).

ATP-binding residues include Q35, K58, T59, D173, E174, I355, R372, and H375. The 192-residue stretch at 39-230 (IPLIKQNYNV…FLVGKDREYR (192 aa)) folds into the Helicase ATP-binding domain. Residues 173-176 (DEIH) carry the DEIH box motif. One can recognise a Helicase C-terminal domain in the interval 247-419 (PVKDLVHSSE…SIHIPKNPLD (173 aa)). A WH domain region spans residues 420 to 506 (VLSQIIVSAS…IFYTNSGTIP (87 aa)). The interval 507–875 (DEAMISVVTE…VNIELEYTSV (369 aa)) is domain 4.

The protein belongs to the Lhr helicase family. Lhr-Core subfamily. As to quaternary structure, monomer and homodimer. The monomeric form has helicase, ATPase and strand annealing activities, while the dimeric form only has ATPAse and strand annealing activities. Interacts with DNA topoisomerase 3 (topA).

The catalysed reaction is Couples ATP hydrolysis with the unwinding of duplex DNA by translocating in the 3'-5' direction.. The enzyme catalyses ATP + H2O = ADP + phosphate + H(+). Its activity is regulated as follows. DNA topoisomerase 3 (topA) inhibits helicase activity on Holliday junctions (HJ) but has no effect on ATPase activity. Its function is as follows. DNA helicase that translocates in a 3'-5' direction on single-stranded (ss)DNA, probably involved in DNA repair. Unwinds DNA in a 3'-5' direction, unwinding is ATP-dependent, acts preferentially on fork and 3'-tailed DNA; bubble and blunt-ended double-stranded (ds)DNA are not substrates. Has winding and unwinding activity, unwinds Holliday junction (HJ) DNA in the presence of ATP, the main product is forked DNA, single-stranded binding protein (SSB) does not stimulate activity. Anneals complementary oligonucleotides in an ATP-independent manner to form HJ and fork structures, thus can perform strand exchange. Preferentially binds HJ, forked and ssDNA, dsDNA is bound less well. LhrC-Core (Hel112) inhibits the exonuclease activity of the HerA-NurA complex on ss- and dsDNA, has no effect on ssDNA nicking by NurA; HerA-NurA are involved in DNA end-resection during DNA double-strand break repair. In Saccharolobus solfataricus (strain ATCC 35092 / DSM 1617 / JCM 11322 / P2) (Sulfolobus solfataricus), this protein is ATP-dependent helicase Lhr-Core.